The primary structure comprises 179 residues: Inner membrane-spanning protein YciB (179 aa).

5 helical membrane passes run 22-42, 50-70, 76-96, 121-141, and 149-169; these read IYAATTALIVATAIVLIYTWI, MALITFVLVAVFGGLTVFFHN, WKVTVIYGLFAGALLFSQWVM, IAWAVFFILCGLANIYIAFWM, and FKVFGLTALTLIFTLLSGVYI.

It belongs to the YciB family.

The protein resides in the cell inner membrane. Functionally, plays a role in cell envelope biogenesis, maintenance of cell envelope integrity and membrane homeostasis. This chain is Inner membrane-spanning protein YciB, found in Enterobacter sp. (strain 638).